The sequence spans 147 residues: Transthyretin (147 aa).

The first 20 residues, 1–20 (MASHRLLLLCLAGLVFVSEA), serve as a signal peptide directing secretion. C30 bears the Sulfocysteine mark. Position 35 (K35) interacts with L-thyroxine. A 4-carboxyglutamate modification is found at E62. S72 is subject to Phosphoserine. L-thyroxine is bound at residue E74. N118 is a glycosylation site (N-linked (GlcNAc...) asparagine). S137 serves as a coordination point for L-thyroxine.

Belongs to the transthyretin family. Homotetramer. Dimer of dimers. In the homotetramer, subunits assemble around a central channel that can accommodate two ligand molecules. Interacts with RBP4. Post-translationally, sulfonation of the reactive cysteine Cys-30 enhances the stability of the native conformation of TTR, avoiding misassembly of the protein leading to amyloid formation. Detected in liver.

The protein localises to the secreted. Its function is as follows. Thyroid hormone-binding protein. Probably transports thyroxine from the bloodstream to the brain. The sequence is that of Transthyretin (TTR) from Pongo abelii (Sumatran orangutan).